The sequence spans 278 residues: tRNA uridine(34) hydroxylase (278 aa).

The Rhodanese domain occupies 122–216 (QDPDVVVIDT…YLETIAPEES (95 aa)). Residue Cys176 is the Cysteine persulfide intermediate of the active site.

The protein belongs to the TrhO family.

The catalysed reaction is uridine(34) in tRNA + AH2 + O2 = 5-hydroxyuridine(34) in tRNA + A + H2O. In terms of biological role, catalyzes oxygen-dependent 5-hydroxyuridine (ho5U) modification at position 34 in tRNAs. This Synechocystis sp. (strain ATCC 27184 / PCC 6803 / Kazusa) protein is tRNA uridine(34) hydroxylase.